The following is a 570-amino-acid chain: Putative periplasmic trehalase (570 aa).

A signal peptide spans 1-34 (MIPPEIRRSVLLQKAIKLALAGTLLTFASFSATA). Substrate-binding positions include Arg159, 166–167 (WD), Asn203, 212–214 (RSQ), 284–286 (RPE), and Gly317. Residues Asp319 and Glu503 each act as proton donor/acceptor in the active site. Glu518 contributes to the substrate binding site. The segment at 544–570 (KPCDSVPSTRPASLSATPTKTPSAATQ) is disordered. The segment covering 554 to 570 (PASLSATPTKTPSAATQ) has biased composition (low complexity).

It belongs to the glycosyl hydrolase 37 family. In terms of assembly, monomer.

It is found in the periplasm. The catalysed reaction is alpha,alpha-trehalose + H2O = alpha-D-glucose + beta-D-glucose. Functionally, provides the cells with the ability to utilize trehalose at high osmolarity by splitting it into glucose molecules that can subsequently be taken up by the phosphotransferase-mediated uptake system. The polypeptide is Putative periplasmic trehalase (Salmonella typhi).